The chain runs to 343 residues: Holliday junction branch migration complex subunit RuvB (343 aa).

A large ATPase domain (RuvB-L) region spans residues 1–182 (MTDPIPLHTP…FGIPVRLNFY (182 aa)). The ATP site is built by L21, R22, G63, K66, T67, T68, R172, Y182, and R219. T67 contacts Mg(2+). The small ATPAse domain (RuvB-S) stretch occupies residues 183 to 253 (TEEELEKVVT…IADAALTRLE (71 aa)). The head domain (RuvB-H) stretch occupies residues 256 to 343 (GLGLDAMDRR…SQTGLFDGKS (88 aa)). DNA contacts are provided by R292, R311, and R316.

The protein belongs to the RuvB family. Homohexamer. Forms an RuvA(8)-RuvB(12)-Holliday junction (HJ) complex. HJ DNA is sandwiched between 2 RuvA tetramers; dsDNA enters through RuvA and exits via RuvB. An RuvB hexamer assembles on each DNA strand where it exits the tetramer. Each RuvB hexamer is contacted by two RuvA subunits (via domain III) on 2 adjacent RuvB subunits; this complex drives branch migration. In the full resolvosome a probable DNA-RuvA(4)-RuvB(12)-RuvC(2) complex forms which resolves the HJ.

It is found in the cytoplasm. It carries out the reaction ATP + H2O = ADP + phosphate + H(+). Its function is as follows. The RuvA-RuvB-RuvC complex processes Holliday junction (HJ) DNA during genetic recombination and DNA repair, while the RuvA-RuvB complex plays an important role in the rescue of blocked DNA replication forks via replication fork reversal (RFR). RuvA specifically binds to HJ cruciform DNA, conferring on it an open structure. The RuvB hexamer acts as an ATP-dependent pump, pulling dsDNA into and through the RuvAB complex. RuvB forms 2 homohexamers on either side of HJ DNA bound by 1 or 2 RuvA tetramers; 4 subunits per hexamer contact DNA at a time. Coordinated motions by a converter formed by DNA-disengaged RuvB subunits stimulates ATP hydrolysis and nucleotide exchange. Immobilization of the converter enables RuvB to convert the ATP-contained energy into a lever motion, pulling 2 nucleotides of DNA out of the RuvA tetramer per ATP hydrolyzed, thus driving DNA branch migration. The RuvB motors rotate together with the DNA substrate, which together with the progressing nucleotide cycle form the mechanistic basis for DNA recombination by continuous HJ branch migration. Branch migration allows RuvC to scan DNA until it finds its consensus sequence, where it cleaves and resolves cruciform DNA. The chain is Holliday junction branch migration complex subunit RuvB from Erythrobacter litoralis (strain HTCC2594).